The following is a 212-amino-acid chain: Ropporin-1 (212 aa).

Residues 12–43 (PELPELLKQFTKAAIRTQPPDLIQWAAEYFGA) enclose the RIIa domain. Position 56 is a phosphoserine (Ser-56). Positions 209–212 (VRLE) are interaction with RHPN1.

This sequence belongs to the ropporin family. Homodimer. Interacts with AKAP3. May interact with SPA17. Interacts with RHPN1. Interacts with FSCB; the interaction increases upon spermatozoa capacitation conditions. Interacts with CFAP61. Post-translationally, sumoylated, sumoylation decreases upon spermatozoa capacitation conditions.

The protein resides in the cell projection. It is found in the cilium. Its subcellular location is the flagellum. Its function is as follows. Important for male fertility. With ROPN1L, involved in fibrous sheath integrity and sperm motility, plays a role in PKA-dependent signaling processes required for spermatozoa capacitation. In Rattus norvegicus (Rat), this protein is Ropporin-1 (Ropn1).